The chain runs to 424 residues: 3-ketoacyl-CoA thiolase B, peroxisomal (424 aa).

Residues 1 to 26 constitute a peroxisome transit peptide; it reads MHRLQVVLGHLAGRPESSSALQAAPC. Positions 1–26 are PTS2-type peroxisomal targeting signal; sequence MHRLQVVLGHLAGRPESSSALQAAPC. The Acyl-thioester intermediate role is filled by Cys-123. Residues Lys-173 and Lys-234 each carry the N6-acetyllysine modification. Residues Arg-249, Thr-252, and Ser-276 each contribute to the CoA site. Catalysis depends on Cys-408, which acts as the Proton donor/acceptor.

The protein belongs to the thiolase-like superfamily. Thiolase family. Homodimer. Interacts (via PTS2-type peroxisomal targeting signal region) with PEX7; leading to its translocation into peroxisomes. Mainly expressed in liver; weaker levels in kidney, intestine and white adipose tissue.

The protein localises to the peroxisome. The enzyme catalyses an acyl-CoA + acetyl-CoA = a 3-oxoacyl-CoA + CoA. It carries out the reaction 2 acetyl-CoA = acetoacetyl-CoA + CoA. The catalysed reaction is hexanoyl-CoA + acetyl-CoA = 3-oxooctanoyl-CoA + CoA. It catalyses the reaction tetradecanoyl-CoA + acetyl-CoA = 3-oxohexadecanoyl-CoA + CoA. The enzyme catalyses 3-oxohexadecanedioyl-CoA + CoA = tetradecanedioyl-CoA + acetyl-CoA. It carries out the reaction 3-oxo-(6Z,9Z,12Z,15Z,18Z,21Z)-tetracosahexaenoyl-CoA + CoA = (4Z,7Z,10Z,13Z,16Z,19Z)-docosahexaenoyl-CoA + acetyl-CoA. It functions in the pathway lipid metabolism; peroxisomal fatty acid beta-oxidation. Responsible for the thiolytic cleavage of straight chain 3-keto fatty acyl-CoAs (3-oxoacyl-CoAs). Plays an important role in fatty acid peroxisomal beta-oxidation. Catalyzes the cleavage of short, medium, long, and very long straight chain 3-oxoacyl-CoAs. The protein is 3-ketoacyl-CoA thiolase B, peroxisomal of Mus musculus (Mouse).